The sequence spans 682 residues: Potassium-transporting ATPase ATP-binding subunit (682 aa).

4 helical membrane-spanning segments follow: residues 34-54 (PVMF…LAMV), 62-82 (ALFT…ANFA), 219-239 (IALT…TATL), and 254-274 (VLVA…LSAI). Residue Asp-307 is the 4-aspartylphosphate intermediate of the active site. Residues Asp-344, Glu-348, 377–384 (FTAQSRMS), and Lys-395 contribute to the ATP site. The Mg(2+) site is built by Asp-518 and Asp-522. The next 3 helical transmembrane spans lie at 588–608 (FAII…LNVM), 616–636 (AILS…PLAL), and 662–682 (LVVP…LGLA).

Belongs to the cation transport ATPase (P-type) (TC 3.A.3) family. Type IA subfamily. The system is composed of three essential subunits: KdpA, KdpB and KdpC.

The protein localises to the cell inner membrane. It catalyses the reaction K(+)(out) + ATP + H2O = K(+)(in) + ADP + phosphate + H(+). Part of the high-affinity ATP-driven potassium transport (or Kdp) system, which catalyzes the hydrolysis of ATP coupled with the electrogenic transport of potassium into the cytoplasm. This subunit is responsible for energy coupling to the transport system and for the release of the potassium ions to the cytoplasm. The sequence is that of Potassium-transporting ATPase ATP-binding subunit from Salmonella schwarzengrund (strain CVM19633).